The sequence spans 894 residues: Microsomal triglyceride transfer protein large subunit (894 aa).

The signal sequence occupies residues M1 to G21. In terms of domain architecture, Vitellogenin spans L28–L658. C174 and C194 are joined by a disulfide.

Interacts with PRAP1. In terms of assembly, heterodimer; heterodimerizes with the protein disulfide isomerase (P4HB/PDI). Interacts with APOB. As to quaternary structure, heterodimer; heterodimerizes with the protein disulfide isomerase (P4HB/PDI). Post-translationally, cleaved by signal peptidase between residues Gln-33 and Asn-34. As to expression, mainly expressed in the intestine and the liver, and at lower levels in white and brown fat cells. Expressed in heart. In terms of tissue distribution, ubiquitous, and is the major isoform in hematopoietic cells and adipocytes.

It is found in the endoplasmic reticulum. The protein localises to the golgi apparatus. It carries out the reaction a 1,2-diacyl-sn-glycero-3-phosphocholine(in) = a 1,2-diacyl-sn-glycero-3-phosphocholine(out). The catalysed reaction is a 1,2-diacyl-sn-glycero-3-phosphoethanolamine(in) = a 1,2-diacyl-sn-glycero-3-phosphoethanolamine(out). It catalyses the reaction a cholesterol ester(in) = a cholesterol ester(out). The enzyme catalyses a triacyl-sn-glycerol(in) = a triacyl-sn-glycerol(out). Its function is as follows. Catalyzes the transport of triglyceride, cholesteryl ester, and phospholipid between phospholipid surfaces. Required for the assembly and secretion of plasma lipoproteins that contain apolipoprotein B. May be involved in regulating cholesteryl ester biosynthesis in cells that produce lipoproteins. Critical for the development of natural killer T (NKT) cells. Required for the assembly and secretion of plasma lipoproteins that contain apolipoprotein B. The polypeptide is Microsomal triglyceride transfer protein large subunit (Mttp) (Mus musculus (Mouse)).